The following is a 347-amino-acid chain: NADH-ubiquinone oxidoreductase chain 2 (347 aa).

10 consecutive transmembrane segments (helical) span residues 13-33 (IFTGTLITALSSHWFFAWLGL), 55-75 (AAIKYFLTQATASMILLMAIL), 96-116 (LMIVTALAMKLGMAPFHFWVP), 122-142 (VPLTSGLLLLTWQKLAPISIM), 151-171 (TNILLTLSILSILVGGWGGLN), 178-198 (ILAYSSITHMGWMMAVLPYNP), 199-219 (DITILNLIIYIILTTTAFLIL), 237-257 (LTWLMPLIPSTLLSLGGLPPL), 274-294 (GNLITPTIMAIITLLNLYFYV), and 326-346 (LPTLTILTTLLLPISPLILSI).

The protein belongs to the complex I subunit 2 family. Core subunit of respiratory chain NADH dehydrogenase (Complex I) which is composed of 45 different subunits. Interacts with TMEM242.

The protein resides in the mitochondrion inner membrane. It catalyses the reaction a ubiquinone + NADH + 5 H(+)(in) = a ubiquinol + NAD(+) + 4 H(+)(out). In terms of biological role, core subunit of the mitochondrial membrane respiratory chain NADH dehydrogenase (Complex I) which catalyzes electron transfer from NADH through the respiratory chain, using ubiquinone as an electron acceptor. Essential for the catalytic activity and assembly of complex I. The sequence is that of NADH-ubiquinone oxidoreductase chain 2 from Pongo abelii (Sumatran orangutan).